Here is a 127-residue protein sequence, read N- to C-terminus: Aspartate 1-decarboxylase (127 aa).

Ser-25 serves as the catalytic Schiff-base intermediate with substrate; via pyruvic acid. A Pyruvic acid (Ser) modification is found at Ser-25. Thr-57 is a binding site for substrate. Residue Tyr-58 is the Proton donor of the active site. 73-75 is a binding site for substrate; the sequence is GAA.

The protein belongs to the PanD family. As to quaternary structure, heterooctamer of four alpha and four beta subunits. Pyruvate serves as cofactor. Post-translationally, is synthesized initially as an inactive proenzyme, which is activated by self-cleavage at a specific serine bond to produce a beta-subunit with a hydroxyl group at its C-terminus and an alpha-subunit with a pyruvoyl group at its N-terminus.

It localises to the cytoplasm. The enzyme catalyses L-aspartate + H(+) = beta-alanine + CO2. It participates in cofactor biosynthesis; (R)-pantothenate biosynthesis; beta-alanine from L-aspartate: step 1/1. In terms of biological role, catalyzes the pyruvoyl-dependent decarboxylation of aspartate to produce beta-alanine. The sequence is that of Aspartate 1-decarboxylase from Trichormus variabilis (strain ATCC 29413 / PCC 7937) (Anabaena variabilis).